Consider the following 346-residue polypeptide: Holliday junction branch migration complex subunit RuvB (346 aa).

A compositionally biased stretch (polar residues) spans Met-1–Ala-11. Residues Met-1–Ala-20 form a disordered region. A large ATPase domain (RuvB-L) region spans residues Met-1 to Tyr-183. ATP is bound by residues Ile-22, Arg-23, Gly-64, Lys-67, Thr-68, Thr-69, Glu-130–Phe-132, Arg-173, Tyr-183, and Arg-220. Residue Thr-68 participates in Mg(2+) binding. Positions Ser-184–Lys-254 are small ATPAse domain (RuvB-S). The interval Pro-257 to Phe-346 is head domain (RuvB-H). Residues Arg-293, Arg-312, and Arg-317 each contribute to the DNA site.

The protein belongs to the RuvB family. As to quaternary structure, homohexamer. Forms an RuvA(8)-RuvB(12)-Holliday junction (HJ) complex. HJ DNA is sandwiched between 2 RuvA tetramers; dsDNA enters through RuvA and exits via RuvB. An RuvB hexamer assembles on each DNA strand where it exits the tetramer. Each RuvB hexamer is contacted by two RuvA subunits (via domain III) on 2 adjacent RuvB subunits; this complex drives branch migration. In the full resolvosome a probable DNA-RuvA(4)-RuvB(12)-RuvC(2) complex forms which resolves the HJ.

It localises to the cytoplasm. The catalysed reaction is ATP + H2O = ADP + phosphate + H(+). Functionally, the RuvA-RuvB-RuvC complex processes Holliday junction (HJ) DNA during genetic recombination and DNA repair, while the RuvA-RuvB complex plays an important role in the rescue of blocked DNA replication forks via replication fork reversal (RFR). RuvA specifically binds to HJ cruciform DNA, conferring on it an open structure. The RuvB hexamer acts as an ATP-dependent pump, pulling dsDNA into and through the RuvAB complex. RuvB forms 2 homohexamers on either side of HJ DNA bound by 1 or 2 RuvA tetramers; 4 subunits per hexamer contact DNA at a time. Coordinated motions by a converter formed by DNA-disengaged RuvB subunits stimulates ATP hydrolysis and nucleotide exchange. Immobilization of the converter enables RuvB to convert the ATP-contained energy into a lever motion, pulling 2 nucleotides of DNA out of the RuvA tetramer per ATP hydrolyzed, thus driving DNA branch migration. The RuvB motors rotate together with the DNA substrate, which together with the progressing nucleotide cycle form the mechanistic basis for DNA recombination by continuous HJ branch migration. Branch migration allows RuvC to scan DNA until it finds its consensus sequence, where it cleaves and resolves cruciform DNA. This chain is Holliday junction branch migration complex subunit RuvB, found in Xanthomonas campestris pv. campestris (strain 8004).